We begin with the raw amino-acid sequence, 341 residues long: Glycerol-3-phosphate dehydrogenase [NAD(P)+] (341 aa).

NADPH is bound by residues serine 14, phenylalanine 15, arginine 35, and lysine 108. Sn-glycerol 3-phosphate is bound by residues lysine 108 and glycine 136. Position 140 (alanine 140) interacts with NADPH. Residues lysine 191, aspartate 244, serine 254, arginine 255, and asparagine 256 each coordinate sn-glycerol 3-phosphate. The active-site Proton acceptor is lysine 191. An NADPH-binding site is contributed by arginine 255. NADPH is bound by residues valine 279 and glutamate 281.

This sequence belongs to the NAD-dependent glycerol-3-phosphate dehydrogenase family.

It localises to the cytoplasm. The catalysed reaction is sn-glycerol 3-phosphate + NAD(+) = dihydroxyacetone phosphate + NADH + H(+). It carries out the reaction sn-glycerol 3-phosphate + NADP(+) = dihydroxyacetone phosphate + NADPH + H(+). It participates in membrane lipid metabolism; glycerophospholipid metabolism. Functionally, catalyzes the reduction of the glycolytic intermediate dihydroxyacetone phosphate (DHAP) to sn-glycerol 3-phosphate (G3P), the key precursor for phospholipid synthesis. The chain is Glycerol-3-phosphate dehydrogenase [NAD(P)+] from Pseudomonas putida (strain ATCC 47054 / DSM 6125 / CFBP 8728 / NCIMB 11950 / KT2440).